Here is a 319-residue protein sequence, read N- to C-terminus: Mercury resistance probable Hg transport protein (319 aa).

Hg(2+) is bound by residues cysteine 298, cysteine 299, cysteine 318, and cysteine 319.

The protein is Mercury resistance probable Hg transport protein of Streptomyces lividans.